The sequence spans 314 residues: MLDFEKPLFEIRNKIESLKESQDKNDVDLQEEIDMLEASLERETKKIYTNLKPWDRVQIARLQERPTTLDYIPYIFDSFMELHGDRNFRDDPAMIGGIGFLNGRAVTVIGQQRGKDTKDNIYRNFGMAHPEGYRKALRLMKQAEKFNRPIFTFIDTKGAYPGKAAEERGQSESIATNLIEMASLKVPVIAIVIGEGGSGGALGIGIANKVLMLENSTYSVISPEGAAALLWKDSNLAKIAAETMKITAHDIKQLGIIDDVISEPLGGAHKDVEQQALAIKSAFVAQLDSLESLSRDEIANDRFEKFRNIGSYIE.

The 258-residue stretch at 32–289 (EIDMLEASLE…KSAFVAQLDS (258 aa)) folds into the CoA carboxyltransferase C-terminal domain.

The protein belongs to the AccA family. In terms of assembly, acetyl-CoA carboxylase is a heterohexamer composed of biotin carboxyl carrier protein (AccB), biotin carboxylase (AccC) and two subunits each of ACCase subunit alpha (AccA) and ACCase subunit beta (AccD).

The protein resides in the cytoplasm. It carries out the reaction N(6)-carboxybiotinyl-L-lysyl-[protein] + acetyl-CoA = N(6)-biotinyl-L-lysyl-[protein] + malonyl-CoA. Its pathway is lipid metabolism; malonyl-CoA biosynthesis; malonyl-CoA from acetyl-CoA: step 1/1. In terms of biological role, component of the acetyl coenzyme A carboxylase (ACC) complex. First, biotin carboxylase catalyzes the carboxylation of biotin on its carrier protein (BCCP) and then the CO(2) group is transferred by the carboxyltransferase to acetyl-CoA to form malonyl-CoA. In Staphylococcus aureus (strain JH9), this protein is Acetyl-coenzyme A carboxylase carboxyl transferase subunit alpha.